We begin with the raw amino-acid sequence, 378 residues long: Pulmonary surfactant-associated protein D (378 aa).

An N-terminal signal peptide occupies residues 1–20; the sequence is MLLLPLSVLILLTQPPRSLG. 2 positions are modified to S-nitrosocysteine: Cys-35 and Cys-40. Residues 43–221 form a disordered region; that stretch reads MENGLPGRDG…ERGAKGESGL (179 aa). In terms of domain architecture, Collagen-like spans 46 to 222; it reads GLPGRDGRDG…RGAKGESGLP (177 aa). Residues 50–65 are compositionally biased toward basic and acidic residues; it reads RDGRDGREGPRGEKGD. Pro-78 bears the 4-hydroxyproline mark. Lys-87 bears the 5-hydroxylysine mark. Asn-90 carries N-linked (GlcNAc...) asparagine glycosylation. Pro-96 carries the post-translational modification 4-hydroxyproline. Lys-99 carries the 5-hydroxylysine modification. Positions 105–114 are enriched in pro residues; that stretch reads CGPPGPPGIP. A compositionally biased stretch (low complexity) spans 137–146; the sequence is PKGETGPKGE. Pro-171 and Pro-177 each carry 4-hydroxyproline. Low complexity predominate over residues 173 to 197; it reads ERGAPGSAGAAGPAGATGPQGPSGA. A compositionally biased stretch (basic and acidic residues) spans 204–216; it reads KGDRGPPGERGAK. Residues 223-254 adopt a coiled-coil conformation; that stretch reads GITALRQQVETLQGQVQRLQKAFSQYKKVELF. The 119-residue stretch at 260–378 folds into the C-type lectin domain; sequence VGEKIFKTGG…GELRLVICEF (119 aa). Intrachain disulfides connect Cys-281/Cys-376 and Cys-354/Cys-368. Asn-323 is a glycosylation site (N-linked (GlcNAc...) asparagine).

It belongs to the SFTPD family. Oligomeric complex of 4 set of homotrimers. Post-translationally, hydroxylation on proline residues within the sequence motif, GXPG, is most likely to be 4-hydroxy as this fits the requirement for 4-hydroxylation in vertebrates. S-nitrosylation at Cys-35 and Cys-40 alters the quaternary structure which results in a pro-inflammatory chemoattractive signaling activity with macrophages.

The protein localises to the secreted. The protein resides in the extracellular space. Its subcellular location is the extracellular matrix. It is found in the surface film. Contributes to the lung's defense against inhaled microorganisms, organic antigens and toxins. Interacts with compounds such as bacterial lipopolysaccharides, oligosaccharides and fatty acids and modulates leukocyte action in immune response. May participate in the extracellular reorganization or turnover of pulmonary surfactant. Binds strongly maltose residues and to a lesser extent other alpha-glucosyl moieties. This is Pulmonary surfactant-associated protein D (SFTPD) from Sus scrofa (Pig).